We begin with the raw amino-acid sequence, 195 residues long: Neurturin (195 aa).

Positions Met-1–Ser-19 are cleaved as a signal peptide. A propeptide spanning residues Val-20–Arg-95 is cleaved from the precursor. 3 disulfides stabilise this stretch: Cys-101-Cys-163, Cys-128-Cys-192, and Cys-132-Cys-194. Residues Arg-147, Arg-156, and Arg-158 each contribute to the heparan sulfate group site.

Belongs to the TGF-beta family. GDNF subfamily. Homodimer; disulfide-linked. Interacts with GFRA2 coreceptor and RET: forms a 2:2:2 ternary complex composed of NRTN ligand, GFRA2 and RET receptor. Also forms a 4:4:4 tetrameric complex composed of 4 copies of NRTN ligand, GFRA2 and RET receptor, which prevents endocytosis of RET. As to expression, widespread distribution.

It localises to the secreted. Its function is as follows. Growth factor that supports the survival of sympathetic neurons in culture. May regulate the development and maintenance of the CNS. Involved in the development of the neural crest. Might control the size of non-neuronal cell population such as haemopoietic cells. Acts by binding to its coreceptor, GFRA2, leading to autophosphorylation and activation of the RET receptor. Heparan sulfate-binding is required for signaling. The polypeptide is Neurturin (Nrtn) (Mus musculus (Mouse)).